The following is a 118-amino-acid chain: Aspartate 1-decarboxylase (118 aa).

S25 acts as the Schiff-base intermediate with substrate; via pyruvic acid in catalysis. S25 is modified (pyruvic acid (Ser)). T57 provides a ligand contact to substrate. The active-site Proton donor is the Y58. Residue 73–75 (GAA) coordinates substrate.

This sequence belongs to the PanD family. In terms of assembly, heterooctamer of four alpha and four beta subunits. Pyruvate is required as a cofactor. Is synthesized initially as an inactive proenzyme, which is activated by self-cleavage at a specific serine bond to produce a beta-subunit with a hydroxyl group at its C-terminus and an alpha-subunit with a pyruvoyl group at its N-terminus.

The protein localises to the cytoplasm. It catalyses the reaction L-aspartate + H(+) = beta-alanine + CO2. Its pathway is cofactor biosynthesis; (R)-pantothenate biosynthesis; beta-alanine from L-aspartate: step 1/1. In terms of biological role, catalyzes the pyruvoyl-dependent decarboxylation of aspartate to produce beta-alanine. The polypeptide is Aspartate 1-decarboxylase (Syntrophomonas wolfei subsp. wolfei (strain DSM 2245B / Goettingen)).